The following is a 530-amino-acid chain: Vesicular acetylcholine transporter (530 aa).

Residues 1-33 (MEPTAPTGQARAAATKLSEAVGAALQEPQRQRR) are Cytoplasmic-facing. Residues 34–54 (LVLVIVCVALLLDNMLYMVIV) traverse the membrane as a helical segment. At 55-125 (PIVPDYIAHM…PTESEDVKIG (71 aa)) the chain is on the lumenal, vesicle side. N-linked (GlcNAc...) asparagine glycosylation is found at asparagine 89 and asparagine 96. A helical transmembrane segment spans residues 126–146 (VLFASKAILQLLVNPLSGPFI). The Cytoplasmic segment spans residues 147–152 (DRMSYD). A helical transmembrane segment spans residues 153–173 (VPLLIGLGVMFASTVMFAFAE). Residues 174-182 (DYATLFAAR) lie on the Lumenal, vesicle side of the membrane. The helical transmembrane segment at 183–203 (SLQGLGSAFADTSGIAMIADK) threads the bilayer. The Cytoplasmic portion of the chain corresponds to 204 to 213 (YPEEPERSRA). A helical transmembrane segment spans residues 214–234 (LGVALAFISFGSLVAPPFGGI). Over 235 to 242 (LYEFAGKR) the chain is Lumenal, vesicle. Residues 243–263 (VPFLVLAAVSLFDALLLLAVA) form a helical membrane-spanning segment. The Cytoplasmic portion of the chain corresponds to 264–289 (KPFSAAARARANLPVGTPIHRLMLDP). Residues 290 to 310 (YIAVVAGALTTCNIPLAFLEP) form a helical membrane-spanning segment. Residues 311 to 325 (TIATWMKHTMAASEW) are Lumenal, vesicle-facing. Residues 326–346 (EMGMVWLPAFVPHVLGVYLTV) form a helical membrane-spanning segment. Residues 347–356 (RLAARYPHLQ) are Cytoplasmic-facing. The helical transmembrane segment at 357 to 377 (WLYGALGLAVIGVSSCVVPAC) threads the bilayer. Residues 378–388 (RSFAPLVVSLC) are Lumenal, vesicle-facing. The chain crosses the membrane as a helical span at residues 389–409 (GLCFGIALVDTALLPTLAFLV). Topologically, residues 410–422 (DVRHVSVYGSVYA) are cytoplasmic. The chain crosses the membrane as a helical span at residues 423 to 443 (IADISYSVAYALGPIVAGHIV). Over 444 to 447 (HSLG) the chain is Lumenal, vesicle. A helical membrane pass occupies residues 448-468 (FEQLSLGMGLANLLYAPVLLL). At 469 to 530 (LRNVGLLTRS…EDDYNYYSRS (62 aa)) the chain is on the cytoplasmic side. A mediates interaction with SEC14L1 region spans residues 471-530 (NVGLLTRSRSERDVLLDEPPQGLYDAVRLREVQGKDGGEPCSPPGPFDGCEDDYNYYSRS). The tract at residues 504–530 (GKDGGEPCSPPGPFDGCEDDYNYYSRS) is disordered.

The protein belongs to the major facilitator superfamily. Vesicular transporter family. In terms of assembly, interacts with SEC14L1. High expression in all major cholinergic cell groups, including peripheral postganglionic parasympathetic cells, preganglionic sympathetic and parasympathetic cells, ventral spinal cord and brainstem motoneurons, cell groups in the basal forebrain, the habenula and the corpus striatum. Weakly expressed in the cortex and hippocampus.

It localises to the cytoplasmic vesicle. It is found in the secretory vesicle. Its subcellular location is the synaptic vesicle membrane. It catalyses the reaction acetylcholine(out) + 2 H(+)(in) = acetylcholine(in) + 2 H(+)(out). The catalysed reaction is choline(in) + 2 H(+)(out) = choline(out) + 2 H(+)(in). The enzyme catalyses serotonin(in) + 2 H(+)(out) = serotonin(out) + 2 H(+)(in). With respect to regulation, potently inhibited by L-vesamicol. Functionally, electrogenic antiporter that exchanges one cholinergic neurotransmitter, acetylcholine or choline, with two intravesicular protons across the membrane of synaptic vesicles. Uses the electrochemical proton gradient established by the V-type proton-pump ATPase to store neurotransmitters inside the vesicles prior to their release via exocytosis. Determines cholinergic vesicular quantal size at presynaptic nerve terminals in developing neuro-muscular junctions with an impact on motor neuron differentiation and innervation pattern. Part of forebrain cholinergic system, regulates hippocampal synapse transmissions that underlie spatial memory formation. Can transport serotonin. The protein is Vesicular acetylcholine transporter (Slc18a3) of Rattus norvegicus (Rat).